A 51-amino-acid chain; its full sequence is Large ribosomal subunit protein eL39 (51 aa).

It belongs to the eukaryotic ribosomal protein eL39 family.

This Thermococcus sibiricus (strain DSM 12597 / MM 739) protein is Large ribosomal subunit protein eL39.